Consider the following 99-residue polypeptide: Malonate decarboxylase acyl carrier protein (99 aa).

S25 carries the post-translational modification O-(phosphoribosyl dephospho-coenzyme A)serine.

It belongs to the MdcC family. Post-translationally, covalently binds the prosthetic group of malonate decarboxylase.

It localises to the cytoplasm. Its function is as follows. Subunit of malonate decarboxylase, it is an acyl carrier protein to which acetyl and malonyl thioester residues are bound via a 2'-(5''-phosphoribosyl)-3'-dephospho-CoA prosthetic group and turn over during the catalytic mechanism. This chain is Malonate decarboxylase acyl carrier protein, found in Pseudomonas aeruginosa (strain UCBPP-PA14).